The chain runs to 244 residues: Biosynthetic peptidoglycan transglycosylase (244 aa).

The chain crosses the membrane as a helical span at residues 25 to 45 (LLLLLAIALLYQSWFLLHIIY).

The protein belongs to the glycosyltransferase 51 family.

The protein resides in the cell inner membrane. It catalyses the reaction [GlcNAc-(1-&gt;4)-Mur2Ac(oyl-L-Ala-gamma-D-Glu-L-Lys-D-Ala-D-Ala)](n)-di-trans,octa-cis-undecaprenyl diphosphate + beta-D-GlcNAc-(1-&gt;4)-Mur2Ac(oyl-L-Ala-gamma-D-Glu-L-Lys-D-Ala-D-Ala)-di-trans,octa-cis-undecaprenyl diphosphate = [GlcNAc-(1-&gt;4)-Mur2Ac(oyl-L-Ala-gamma-D-Glu-L-Lys-D-Ala-D-Ala)](n+1)-di-trans,octa-cis-undecaprenyl diphosphate + di-trans,octa-cis-undecaprenyl diphosphate + H(+). Its pathway is cell wall biogenesis; peptidoglycan biosynthesis. Peptidoglycan polymerase that catalyzes glycan chain elongation from lipid-linked precursors. This chain is Biosynthetic peptidoglycan transglycosylase, found in Nitrosomonas eutropha (strain DSM 101675 / C91 / Nm57).